Consider the following 520-residue polypeptide: AAA-ATPase At5g57480 (520 aa).

Positions 1 to 24 are cleaved as a signal peptide; it reads MKEYWTSLASLLGVLAFCQSLMQS. Residue 244–251 coordinates ATP; it reads GPPGTGKS. 2 disordered regions span residues 307–340 and 467–520; these read KKNS…EEGG and NVKD…TRED. The span at 328–340 shows a compositional bias: gly residues; it reads SGSGSGGSGEEGG. The segment covering 497–512 has biased composition (acidic residues); that stretch reads QNEDEDHDEEEIELED.

This sequence belongs to the AAA ATPase family. BCS1 subfamily. Mg(2+) is required as a cofactor.

The catalysed reaction is ATP + H2O = ADP + phosphate + H(+). The chain is AAA-ATPase At5g57480 from Arabidopsis thaliana (Mouse-ear cress).